The following is a 548-amino-acid chain: Flagellin (548 aa).

This sequence belongs to the bacterial flagellin family.

The protein resides in the secreted. It localises to the bacterial flagellum. Its function is as follows. Flagellin is the subunit protein which polymerizes to form the filaments of bacterial flagella. In Escherichia coli O127:H6 (strain E2348/69 / EPEC), this protein is Flagellin (fliC).